Here is a 352-residue protein sequence, read N- to C-terminus: tRNA pseudouridine synthase D (352 aa).

The Nucleophile role is filled by D81. The region spanning 157–303 is the TRUD domain; the sequence is GVPNYFGAQR…MDHERRILRL (147 aa).

The protein belongs to the pseudouridine synthase TruD family.

The catalysed reaction is uridine(13) in tRNA = pseudouridine(13) in tRNA. In terms of biological role, responsible for synthesis of pseudouridine from uracil-13 in transfer RNAs. The sequence is that of tRNA pseudouridine synthase D from Pseudomonas entomophila (strain L48).